A 426-amino-acid chain; its full sequence is Putative F-box protein At4g38870 (426 aa).

One can recognise an F-box domain in the interval 47 to 92 (SVNSELLPVDLIMEILKKLSLKPLIRFLCVSKLWASIIRDPYFMKL).

The sequence is that of Putative F-box protein At4g38870 from Arabidopsis thaliana (Mouse-ear cress).